The primary structure comprises 89 residues: Small ribosomal subunit protein uS15 (89 aa).

Belongs to the universal ribosomal protein uS15 family. In terms of assembly, part of the 30S ribosomal subunit. Forms a bridge to the 50S subunit in the 70S ribosome, contacting the 23S rRNA.

One of the primary rRNA binding proteins, it binds directly to 16S rRNA where it helps nucleate assembly of the platform of the 30S subunit by binding and bridging several RNA helices of the 16S rRNA. In terms of biological role, forms an intersubunit bridge (bridge B4) with the 23S rRNA of the 50S subunit in the ribosome. The polypeptide is Small ribosomal subunit protein uS15 (Pediococcus pentosaceus (strain ATCC 25745 / CCUG 21536 / LMG 10740 / 183-1w)).